The primary structure comprises 393 residues: Fructose-bisphosphate aldolase 4, cytosolic (393 aa).

R73 provides a ligand contact to substrate. C207 bears the S-glutathionyl cysteine; transient; alternate mark. At C207 the chain carries S-nitrosocysteine; transient; alternate. E217 serves as the catalytic Proton acceptor. K259 functions as the Schiff-base intermediate with dihydroxyacetone-P in the catalytic mechanism. Substrate-binding positions include 301-303 (SGG) and R333.

This sequence belongs to the class I fructose-bisphosphate aldolase family. In terms of assembly, homotetramer. In terms of processing, S-glutathionylated at Cys-207. Post-translationally, S-nitrosylated at Cys-207. In terms of tissue distribution, highly expressed in flowers.

The protein localises to the cytoplasm. It localises to the cytosol. The catalysed reaction is beta-D-fructose 1,6-bisphosphate = D-glyceraldehyde 3-phosphate + dihydroxyacetone phosphate. It functions in the pathway carbohydrate degradation; glycolysis; D-glyceraldehyde 3-phosphate and glycerone phosphate from D-glucose: step 4/4. Functionally, fructose-bisphosphate aldolase that plays a key role in glycolysis and gluconeogenesis. The polypeptide is Fructose-bisphosphate aldolase 4, cytosolic (Arabidopsis thaliana (Mouse-ear cress)).